A 191-amino-acid chain; its full sequence is Cell division protein SepF (191 aa).

Positions 151 to 164 (SSSPEEASPSSVST) are enriched in low complexity. Residues 151–191 (SSSPEEASPSSVSTEKTPQYSLGKNTTPEPAWGNSKLSAYS) form a disordered region. The segment covering 165 to 178 (EKTPQYSLGKNTTP) has biased composition (polar residues).

Belongs to the SepF family. Homodimer. Interacts with FtsZ.

The protein localises to the cytoplasm. In terms of biological role, cell division protein that is part of the divisome complex and is recruited early to the Z-ring. Probably stimulates Z-ring formation, perhaps through the cross-linking of FtsZ protofilaments. Its function overlaps with FtsA. The sequence is that of Cell division protein SepF from Prochlorococcus marinus (strain MIT 9301).